Consider the following 186-residue polypeptide: ATP synthase subunit delta (186 aa).

This sequence belongs to the ATPase delta chain family. F-type ATPases have 2 components, F(1) - the catalytic core - and F(0) - the membrane proton channel. F(1) has five subunits: alpha(3), beta(3), gamma(1), delta(1), epsilon(1). F(0) has three main subunits: a(1), b(2) and c(10-14). The alpha and beta chains form an alternating ring which encloses part of the gamma chain. F(1) is attached to F(0) by a central stalk formed by the gamma and epsilon chains, while a peripheral stalk is formed by the delta and b chains.

The protein localises to the cell inner membrane. In terms of biological role, f(1)F(0) ATP synthase produces ATP from ADP in the presence of a proton or sodium gradient. F-type ATPases consist of two structural domains, F(1) containing the extramembraneous catalytic core and F(0) containing the membrane proton channel, linked together by a central stalk and a peripheral stalk. During catalysis, ATP synthesis in the catalytic domain of F(1) is coupled via a rotary mechanism of the central stalk subunits to proton translocation. Its function is as follows. This protein is part of the stalk that links CF(0) to CF(1). It either transmits conformational changes from CF(0) to CF(1) or is implicated in proton conduction. The polypeptide is ATP synthase subunit delta (Brucella anthropi (strain ATCC 49188 / DSM 6882 / CCUG 24695 / JCM 21032 / LMG 3331 / NBRC 15819 / NCTC 12168 / Alc 37) (Ochrobactrum anthropi)).